Reading from the N-terminus, the 449-residue chain is Tubulin beta chain (449 aa).

GTP-binding residues include Q11, E69, S138, G142, T143, G144, N204, and N226. E69 is a Mg(2+) binding site. The tract at residues 426–449 (QDATAEEEGEFDEEEGVMDAEGAA) is disordered. Positions 429 to 443 (TAEEEGEFDEEEGVM) are enriched in acidic residues.

This sequence belongs to the tubulin family. In terms of assembly, dimer of alpha and beta chains. A typical microtubule is a hollow water-filled tube with an outer diameter of 25 nm and an inner diameter of 15 nM. Alpha-beta heterodimers associate head-to-tail to form protofilaments running lengthwise along the microtubule wall with the beta-tubulin subunit facing the microtubule plus end conferring a structural polarity. Microtubules usually have 13 protofilaments but different protofilament numbers can be found in some organisms and specialized cells. Mg(2+) is required as a cofactor.

It localises to the cytoplasm. Its subcellular location is the cytoskeleton. Tubulin is the major constituent of microtubules, a cylinder consisting of laterally associated linear protofilaments composed of alpha- and beta-tubulin heterodimers. Microtubules grow by the addition of GTP-tubulin dimers to the microtubule end, where a stabilizing cap forms. Below the cap, tubulin dimers are in GDP-bound state, owing to GTPase activity of alpha-tubulin. This chain is Tubulin beta chain, found in Eimeria tenella (Coccidian parasite).